A 262-amino-acid chain; its full sequence is Origin recognition complex subunit 6 (262 aa).

Positions 197-217 (ALKRKKPEFSPTLKKKEPGLE) are disordered. Residue K221 forms a Glycyl lysine isopeptide (Lys-Gly) (interchain with G-Cter in SUMO2) linkage. T239 carries the post-translational modification Phosphothreonine.

The protein belongs to the ORC6 family. As to quaternary structure, component of ORC, a complex composed of at least 6 subunits: ORC1, ORC2, ORC3, ORC4, ORC5 and ORC6. ORC is regulated in a cell-cycle dependent manner. It is sequentially assembled at the exit from anaphase of mitosis and disassembled as cells enter S phase. Interacts with DBF4.

Its subcellular location is the nucleus. Functionally, component of the origin recognition complex (ORC) that binds origins of replication. DNA-binding is ATP-dependent. The specific DNA sequences that define origins of replication have not been identified yet. ORC is required to assemble the pre-replication complex necessary to initiate DNA replication. The protein is Origin recognition complex subunit 6 (Orc6) of Mus musculus (Mouse).